Consider the following 131-residue polypeptide: Transcription antitermination protein NusB (131 aa).

Belongs to the NusB family.

Involved in transcription antitermination. Required for transcription of ribosomal RNA (rRNA) genes. Binds specifically to the boxA antiterminator sequence of the ribosomal RNA (rrn) operons. In Campylobacter hominis (strain ATCC BAA-381 / DSM 21671 / CCUG 45161 / LMG 19568 / NCTC 13146 / CH001A), this protein is Transcription antitermination protein NusB.